Here is a 378-residue protein sequence, read N- to C-terminus: Probable pectin lyase A (378 aa).

The signal sequence occupies residues 1-18 (MKYASFLALVGFITSTSA). Cystine bridges form between Cys81–Cys100 and Cys90–Cys224. Residue Arg254 is part of the active site. Cys321 and Cys329 are disulfide-bonded.

The protein belongs to the polysaccharide lyase 1 family.

The protein resides in the secreted. It catalyses the reaction Eliminative cleavage of (1-&gt;4)-alpha-D-galacturonan methyl ester to give oligosaccharides with 4-deoxy-6-O-methyl-alpha-D-galact-4-enuronosyl groups at their non-reducing ends.. Functionally, pectinolytic enzymes consist of four classes of enzymes: pectin lyase, polygalacturonase, pectin methylesterase and rhamnogalacturonase. Among pectinolytic enzymes, pectin lyase is the most important in depolymerization of pectin, since it cleaves internal glycosidic bonds of highly methylated pectins. The sequence is that of Probable pectin lyase A (pelA) from Aspergillus clavatus (strain ATCC 1007 / CBS 513.65 / DSM 816 / NCTC 3887 / NRRL 1 / QM 1276 / 107).